Consider the following 218-residue polypeptide: Transcription initiation factor TFIID subunit 10 (218 aa).

Composition is skewed to low complexity over residues 1 to 21 and 29 to 39; these read MSCSGSGADPEAAPASAASAP and APAALPSSTAA. Residues 1 to 85 are disordered; that stretch reads MSCSGSGADP…GAAPVSAGGA (85 aa). An N-acetylserine modification is found at serine 2. Serine 44 carries the post-translational modification Phosphoserine. Threonine 48 carries the post-translational modification Phosphothreonine. Positions 48–62 are enriched in gly residues; that stretch reads TAGGPGAGAAAGGTG. Positions 187-189 match the [KR]-[STA]-K motif motif; that stretch reads KSK. Residue lysine 189 is modified to Allysine; alternate. Lysine 189 carries the N6,N6,N6-trimethyllysine; alternate modification.

It belongs to the TAF10 family. Component of the TFIID basal transcription factor complex, composed of TATA-box-binding protein TBP, and a number of TBP-associated factors (TAFs), including TAF1, TAF2, TAF3, TAF4, TAF5, TAF6, TAF7, TAF8, TAF9, TAF10, TAF11, TAF12 and TAF13. Component of the TATA-binding protein-free TAF complex (TFTC), the PCAF histone acetylase complex and the STAGA transcription coactivator-HAT complex. The PCAF complex consists at least of TADA2L/ADA2, TADA3L/ADA3, SUPT3H, TAF5L TAF6L, TAF9, TAF10, TAF12 and TRRAP. The TFTC-HAT complex consists at least of TAF5L, TAF6L, TADA3L, SUPT3H, TAF2, TAF4, TAF5, GCN5L2/GCN5, TAF10 and TRRAP. The STAGA transcription coactivator-HAT complex consists at least of SUPT3H, GCN5L2, TAF5L, TAF6L, SUPT7L, TADA3L, TAD1L, TAF10, TAF12, TRRAP and TAF9. The STAGA core complex is associated with a subcomplex required for histone deubiquitination composed of ATXN7L3, ENY2 and USP22. Interacts with TAF3. Interacts with LOXL2. Interacts with TAF12 isoform TAFII20; the interaction is direct. Monomethylated at Lys-189 by SETD7, leading to increased affinity for RNA polymerase II. In terms of processing, lysine deamination at Lys-189 to form allysine is mediated by LOXL2. Allysine formation by LOXL2 results in release of TAF10 from promoters, leading to inhibition of TFIID-dependent transcription.

It localises to the nucleus. The TFIID basal transcription factor complex plays a major role in the initiation of RNA polymerase II (Pol II)-dependent transcription. TFIID recognizes and binds promoters with or without a TATA box via its subunit TBP, a TATA-box-binding protein, and promotes assembly of the pre-initiation complex (PIC). The TFIID complex consists of TBP and TBP-associated factors (TAFs), including TAF1, TAF2, TAF3, TAF4, TAF5, TAF6, TAF7, TAF8, TAF9, TAF10, TAF11, TAF12 and TAF13. TAF10 is also component of the PCAF histone acetylase complex, the TATA-binding protein-free TAF complex (TFTC) and the STAGA transcription coactivator-HAT complex. May regulate cyclin E expression. The polypeptide is Transcription initiation factor TFIID subunit 10 (TAF10) (Homo sapiens (Human)).